The following is a 244-amino-acid chain: UDP-2,3-diacylglucosamine hydrolase (244 aa).

Positions 8, 10, 41, 79, and 114 each coordinate Mn(2+). 79-80 serves as a coordination point for substrate; it reads NR. D122, S160, N164, K167, and H195 together coordinate substrate. Mn(2+) contacts are provided by H195 and H197.

This sequence belongs to the LpxH family. Mn(2+) serves as cofactor.

Its subcellular location is the cell inner membrane. The enzyme catalyses UDP-2-N,3-O-bis[(3R)-3-hydroxytetradecanoyl]-alpha-D-glucosamine + H2O = 2-N,3-O-bis[(3R)-3-hydroxytetradecanoyl]-alpha-D-glucosaminyl 1-phosphate + UMP + 2 H(+). The protein operates within glycolipid biosynthesis; lipid IV(A) biosynthesis; lipid IV(A) from (3R)-3-hydroxytetradecanoyl-[acyl-carrier-protein] and UDP-N-acetyl-alpha-D-glucosamine: step 4/6. In terms of biological role, hydrolyzes the pyrophosphate bond of UDP-2,3-diacylglucosamine to yield 2,3-diacylglucosamine 1-phosphate (lipid X) and UMP by catalyzing the attack of water at the alpha-P atom. Involved in the biosynthesis of lipid A, a phosphorylated glycolipid that anchors the lipopolysaccharide to the outer membrane of the cell. The sequence is that of UDP-2,3-diacylglucosamine hydrolase from Marinobacter nauticus (strain ATCC 700491 / DSM 11845 / VT8) (Marinobacter aquaeolei).